We begin with the raw amino-acid sequence, 432 residues long: Histidine--tRNA ligase (432 aa).

Belongs to the class-II aminoacyl-tRNA synthetase family. Homodimer.

It localises to the cytoplasm. The catalysed reaction is tRNA(His) + L-histidine + ATP = L-histidyl-tRNA(His) + AMP + diphosphate + H(+). This Ralstonia nicotianae (strain ATCC BAA-1114 / GMI1000) (Ralstonia solanacearum) protein is Histidine--tRNA ligase.